The following is a 272-amino-acid chain: MPELPEVETVRAGLTPHLTGRQIKAVTVREPRLRWPVDPDLSAKLAGLEVRTVERRAKYLLIGFGHEQWLIVHLGMSGSVRVLPDDTPPQKHDHLDFILDDGHLVRYHDPRRFGAVLWHLGPPDSHPLLSRLGPEPLSDGFDATGLLHALAGRRQALKVALMDNAVVVGVGNIYANESLFEAGLDPRRPALSLTADEAGQLVQSVRHTLARAIAAGGSTLRDFRDAIGKPGYFQQDYAVYGRQGQSCPRCGGLVERCRLGQRSTFFCPACQR.

Pro-2 acts as the Schiff-base intermediate with DNA in catalysis. Glu-3 serves as the catalytic Proton donor. Lys-58 serves as the catalytic Proton donor; for beta-elimination activity. Residues His-92, Arg-111, and Arg-153 each contribute to the DNA site. An FPG-type zinc finger spans residues 238–272 (AVYGRQGQSCPRCGGLVERCRLGQRSTFFCPACQR). Arg-262 serves as the catalytic Proton donor; for delta-elimination activity.

Belongs to the FPG family. Monomer. It depends on Zn(2+) as a cofactor.

The catalysed reaction is Hydrolysis of DNA containing ring-opened 7-methylguanine residues, releasing 2,6-diamino-4-hydroxy-5-(N-methyl)formamidopyrimidine.. It catalyses the reaction 2'-deoxyribonucleotide-(2'-deoxyribose 5'-phosphate)-2'-deoxyribonucleotide-DNA = a 3'-end 2'-deoxyribonucleotide-(2,3-dehydro-2,3-deoxyribose 5'-phosphate)-DNA + a 5'-end 5'-phospho-2'-deoxyribonucleoside-DNA + H(+). Its function is as follows. Involved in base excision repair of DNA damaged by oxidation or by mutagenic agents. Acts as a DNA glycosylase that recognizes and removes damaged bases. Has a preference for oxidized purines, such as 7,8-dihydro-8-oxoguanine (8-oxoG). Has AP (apurinic/apyrimidinic) lyase activity and introduces nicks in the DNA strand. Cleaves the DNA backbone by beta-delta elimination to generate a single-strand break at the site of the removed base with both 3'- and 5'-phosphates. This chain is Formamidopyrimidine-DNA glycosylase, found in Laribacter hongkongensis (strain HLHK9).